The following is a 365-amino-acid chain: MAEFVRAQIFGTTFEITSRYTDLQPVGMGAFGLVCSARDQLTGQPVAVKKIMKPFSTPVLSKRTYRELKLLKHLRHENIISLSDIFISPLEDIYFVTELLGTDLHRLLTSRPLEKQFIQYFLYQILRGLKYVHSAGVVHRDLKPSNILINENCDLKICDFGLARIQDPQMTGYVSTRYYRAPEIMLTWQKYDVEVDIWSAACIFAEMLEGKPLFPGKDHVNQFSIITELLGTPPDDVIQTICSENTLRFVKSLPKRERQPLASKFKNADPDAVDLLERMLVFDPKKRIRAGEALAHEYLAPYHDPTDEPVAEEKFDWSFNDADLPVDTWKIMYSEILDFHNIDQANDAGQVLVEGAVADGQQAFA.

A Protein kinase domain is found at 20 to 299 (YTDLQPVGMG…AGEALAHEYL (280 aa)). Residues 26 to 34 (VGMGAFGLV) and Lys-49 contribute to the ATP site. Asp-141 acts as the Proton acceptor in catalysis. Thr-171 carries the post-translational modification Phosphothreonine. The TXY motif lies at 171–173 (TGY). Tyr-173 bears the Phosphotyrosine mark.

The protein belongs to the protein kinase superfamily. Ser/Thr protein kinase family. MAP kinase subfamily. HOG1 sub-subfamily. Requires Mg(2+) as cofactor. Post-translationally, dually phosphorylated on Thr-171 and Tyr-173, which activates the enzyme.

The protein resides in the cytoplasm. The protein localises to the nucleus. It catalyses the reaction L-seryl-[protein] + ATP = O-phospho-L-seryl-[protein] + ADP + H(+). It carries out the reaction L-threonyl-[protein] + ATP = O-phospho-L-threonyl-[protein] + ADP + H(+). Activated by tyrosine and threonine phosphorylation. Proline-directed serine/threonine-protein kinase involved in a signal transduction pathway that is activated by changes in the osmolarity of the extracellular environment. Controls osmotic regulation of transcription of target genes. The polypeptide is Mitogen-activated protein kinase hog1 (hog1) (Aspergillus niger (strain ATCC MYA-4892 / CBS 513.88 / FGSC A1513)).